The chain runs to 171 residues: Probable deoxyuridine 5'-triphosphate nucleotidohydrolase (171 aa).

Belongs to the dCTP deaminase family. Archaeal dUTPase subfamily.

It catalyses the reaction dUTP + H2O = dUMP + diphosphate + H(+). Its pathway is pyrimidine metabolism; dUMP biosynthesis; dUMP from dCTP (dUTP route): step 2/2. Its function is as follows. This enzyme is involved in nucleotide metabolism: it produces dUMP, the immediate precursor of thymidine nucleotides and it decreases the intracellular concentration of dUTP so that uracil cannot be incorporated into DNA. The chain is Probable deoxyuridine 5'-triphosphate nucleotidohydrolase from Methanosarcina mazei (strain ATCC BAA-159 / DSM 3647 / Goe1 / Go1 / JCM 11833 / OCM 88) (Methanosarcina frisia).